We begin with the raw amino-acid sequence, 183 residues long: Beta-defensin 129 (183 aa).

Positions M1–T19 are cleaved as a signal peptide. Intrachain disulfides connect C27/C53, C34/C48, and C38/C54. A disordered region spans residues A142 to Q183. A compositionally biased stretch (pro residues) spans S159–L170.

Belongs to the beta-defensin family.

The protein resides in the secreted. In terms of biological role, has antibacterial activity. The polypeptide is Beta-defensin 129 (DEFB129) (Macaca fascicularis (Crab-eating macaque)).